The primary structure comprises 164 residues: Transmembrane protein 234 (164 aa).

3 helical membrane passes run 1-21, 82-102, and 112-132; these read MAAS…WGGT, LAVP…GKAL, and VAGM…SVPW.

The protein belongs to the TMEM234 family.

The protein localises to the membrane. This is Transmembrane protein 234 (TMEM234) from Homo sapiens (Human).